The primary structure comprises 417 residues: Serine hydroxymethyltransferase (417 aa).

(6S)-5,6,7,8-tetrahydrofolate-binding positions include L112 and 116–118; that span reads GHL. An N6-(pyridoxal phosphate)lysine modification is found at K221. E247 serves as a coordination point for (6S)-5,6,7,8-tetrahydrofolate.

The protein belongs to the SHMT family. As to quaternary structure, homodimer. It depends on pyridoxal 5'-phosphate as a cofactor.

The protein localises to the cytoplasm. The enzyme catalyses (6R)-5,10-methylene-5,6,7,8-tetrahydrofolate + glycine + H2O = (6S)-5,6,7,8-tetrahydrofolate + L-serine. It functions in the pathway one-carbon metabolism; tetrahydrofolate interconversion. The protein operates within amino-acid biosynthesis; glycine biosynthesis; glycine from L-serine: step 1/1. In terms of biological role, catalyzes the reversible interconversion of serine and glycine with tetrahydrofolate (THF) serving as the one-carbon carrier. This reaction serves as the major source of one-carbon groups required for the biosynthesis of purines, thymidylate, methionine, and other important biomolecules. Also exhibits THF-independent aldolase activity toward beta-hydroxyamino acids, producing glycine and aldehydes, via a retro-aldol mechanism. The sequence is that of Serine hydroxymethyltransferase from Borrelia hermsii (strain HS1 / DAH).